The sequence spans 277 residues: uncharacterized protein (277 aa).

Residues 232–262 (NNESAICESQASSKEDERSDKTTSSSKKKSF) form a disordered region. Polar residues predominate over residues 234–243 (ESAICESQAS).

The protein resides in the cytoplasm. The protein localises to the nucleus. This is an uncharacterized protein from Schizosaccharomyces pombe (strain 972 / ATCC 24843) (Fission yeast).